A 517-amino-acid polypeptide reads, in one-letter code: Tyrosine-protein kinase Fgr (517 aa).

The N-myristoyl glycine moiety is linked to residue Gly-2. S-palmitoyl cysteine attachment occurs at residues Cys-3 and Cys-6. Positions 17 to 33 are enriched in basic and acidic residues; that stretch reads VGLEGDFRSQGAEERYY. The interval 17–46 is disordered; sequence VGLEGDFRSQGAEERYYPDPTQGRSSSISP. A Phosphotyrosine modification is found at Tyr-32. Ser-50 carries the post-translational modification Phosphoserine. Positions 65-126 constitute an SH3 domain; sequence TGVTIFVALY…PSNYVAPVDS (62 aa). Residues 132–229 enclose the SH2 domain; sequence WYFGKISRKD…GLCYLLTAPC (98 aa). At Tyr-196 the chain carries Phosphotyrosine. Ser-206 carries the post-translational modification Phosphoserine. In terms of domain architecture, Protein kinase spans 251–504; it reads IALDRRLGTG…YLQSFLEDYF (254 aa). Residues 257–265 and Lys-279 contribute to the ATP site; that span reads LGTGCFGDV. The active-site Proton acceptor is Asp-370. Phosphotyrosine; by autocatalysis is present on Tyr-400. Position 511 is a phosphotyrosine; by SRC (Tyr-511).

It belongs to the protein kinase superfamily. Tyr protein kinase family. SRC subfamily. As to quaternary structure, interacts with ITGB1, ITGB2, MS4A2/FCER1B and FCGR2. Interacts (via SH2 domain) with SYK (tyrosine phosphorylated). Interacts (via SH2 domain) with FLT3 (tyrosine phosphorylated). Interacts with PTK2/FAK1. Interacts (via SH2 domain) with HCLS1 (tyrosine phosphorylated by SYK). Interacts with SIRPA and PTPNS1. Interacts (not phosphorylated on tyrosine residues) with CBL; FGR tyrosine phosphorylation promotes dissociation. Interacts with CLNK. Ubiquitinated. Becomes ubiquitinated in response to ITGB2 signaling; this does not lead to degradation. In terms of processing, phosphorylated. Autophosphorylated on tyrosine residues. Becomes phosphorylated in response to FCGR2 engagement, cell adhesion and signaling by ITGB2. Prior phosphorylation at Tyr-511 by SRC inhibits ulterior autophosphorylation at Tyr-400. As to expression, detected in brain cortex (at protein level).

It localises to the cell membrane. It is found in the cell projection. The protein localises to the ruffle membrane. The protein resides in the cytoplasm. Its subcellular location is the cytosol. It localises to the cytoskeleton. It is found in the mitochondrion inner membrane. The protein localises to the mitochondrion intermembrane space. The catalysed reaction is L-tyrosyl-[protein] + ATP = O-phospho-L-tyrosyl-[protein] + ADP + H(+). Activated by autophosphorylation. Prior phosphorylation at Tyr-511 by SRC inhibits ulterior autophosphorylation at Tyr-400. Activated by phorbol myristate acetate, phosphatidic acid and poly-Lys. Binding (via SH2 domain) of HCLS1 that is already phosphorylated by SYK strongly increases kinase activity. Its function is as follows. Non-receptor tyrosine-protein kinase that transmits signals from cell surface receptors devoid of kinase activity and contributes to the regulation of immune responses, including neutrophil, monocyte, macrophage and mast cell functions, cytoskeleton remodeling in response to extracellular stimuli, phagocytosis, cell adhesion and migration. Promotes mast cell degranulation, release of inflammatory cytokines and IgE-mediated anaphylaxis. Acts downstream of receptors that bind the Fc region of immunoglobulins, such as MS4A2/FCER1B, FCER1G and FCGR2. Acts downstream of ITGB1 and ITGB2, and regulates actin cytoskeleton reorganization, cell spreading and adhesion. Depending on the context, activates or inhibits cellular responses. Functions as a negative regulator of ITGB2 signaling, phagocytosis and SYK activity in monocytes. Required for normal ITGB1 and ITGB2 signaling, normal cell spreading and adhesion in neutrophils and macrophages. Functions as a positive regulator of cell migration and regulates cytoskeleton reorganization via RAC1 activation. Phosphorylates SYK (in vitro) and promotes SYK-dependent activation of AKT1 and MAP kinase signaling. Phosphorylates PLD2 in antigen-stimulated mast cells, leading to PLD2 activation and the production of the signaling molecules lysophosphatidic acid and diacylglycerol. Promotes activation of PIK3R1. Phosphorylates FASLG, and thereby regulates its ubiquitination and subsequent internalization. Phosphorylates ABL1. Promotes phosphorylation of CBL, CTTN, PIK3R1, PTK2/FAK1, PTK2B/PYK2 and VAV2. Phosphorylates HCLS1 that has already been phosphorylated by SYK, but not unphosphorylated HCLS1. Together with CLNK, it acts as a negative regulator of natural killer cell-activating receptors and inhibits interferon-gamma production. This is Tyrosine-protein kinase Fgr (Fgr) from Rattus norvegicus (Rat).